A 238-amino-acid chain; its full sequence is UDP-2,3-diacylglucosamine hydrolase (238 aa).

Mn(2+) contacts are provided by Asp-8, His-10, Asp-41, Asn-78, and His-113. 78–79 (NR) is a substrate binding site. Positions 121, 159, 163, 166, and 194 each coordinate substrate. Positions 194 and 196 each coordinate Mn(2+).

It belongs to the LpxH family. Requires Mn(2+) as cofactor.

It localises to the cell inner membrane. The catalysed reaction is UDP-2-N,3-O-bis[(3R)-3-hydroxytetradecanoyl]-alpha-D-glucosamine + H2O = 2-N,3-O-bis[(3R)-3-hydroxytetradecanoyl]-alpha-D-glucosaminyl 1-phosphate + UMP + 2 H(+). Its pathway is glycolipid biosynthesis; lipid IV(A) biosynthesis; lipid IV(A) from (3R)-3-hydroxytetradecanoyl-[acyl-carrier-protein] and UDP-N-acetyl-alpha-D-glucosamine: step 4/6. Functionally, hydrolyzes the pyrophosphate bond of UDP-2,3-diacylglucosamine to yield 2,3-diacylglucosamine 1-phosphate (lipid X) and UMP by catalyzing the attack of water at the alpha-P atom. Involved in the biosynthesis of lipid A, a phosphorylated glycolipid that anchors the lipopolysaccharide to the outer membrane of the cell. This Shewanella halifaxensis (strain HAW-EB4) protein is UDP-2,3-diacylglucosamine hydrolase.